The sequence spans 259 residues: Thiazole synthase (259 aa).

Catalysis depends on lysine 95, which acts as the Schiff-base intermediate with DXP. 1-deoxy-D-xylulose 5-phosphate is bound by residues glycine 156, 182–183 (AG), and 204–205 (NT).

This sequence belongs to the ThiG family. As to quaternary structure, homotetramer. Forms heterodimers with either ThiH or ThiS.

It localises to the cytoplasm. It catalyses the reaction [ThiS sulfur-carrier protein]-C-terminal-Gly-aminoethanethioate + 2-iminoacetate + 1-deoxy-D-xylulose 5-phosphate = [ThiS sulfur-carrier protein]-C-terminal Gly-Gly + 2-[(2R,5Z)-2-carboxy-4-methylthiazol-5(2H)-ylidene]ethyl phosphate + 2 H2O + H(+). The protein operates within cofactor biosynthesis; thiamine diphosphate biosynthesis. Functionally, catalyzes the rearrangement of 1-deoxy-D-xylulose 5-phosphate (DXP) to produce the thiazole phosphate moiety of thiamine. Sulfur is provided by the thiocarboxylate moiety of the carrier protein ThiS. In vitro, sulfur can be provided by H(2)S. This chain is Thiazole synthase, found in Proteus mirabilis (strain HI4320).